Here is a 150-residue protein sequence, read N- to C-terminus: FAD synthase (150 aa).

ATP contacts are provided by residues 11 to 12 (TF), 16 to 19 (HPGH), Asp-96, and Tyr-124.

The protein belongs to the archaeal FAD synthase family. In terms of assembly, homodimer. The cofactor is a divalent metal cation.

The catalysed reaction is FMN + ATP + H(+) = FAD + diphosphate. It functions in the pathway cofactor biosynthesis; FAD biosynthesis; FAD from FMN: step 1/1. In terms of biological role, catalyzes the transfer of the AMP portion of ATP to flavin mononucleotide (FMN) to produce flavin adenine dinucleotide (FAD) coenzyme. The sequence is that of FAD synthase from Methanocaldococcus fervens (strain DSM 4213 / JCM 15782 / AG86) (Methanococcus fervens).